Here is an 83-residue protein sequence, read N- to C-terminus: uncharacterized protein (83 aa).

Transmembrane regions (helical) follow at residues 7 to 26 (FARFVEYSFFAVFAALIVSY), 36 to 58 (LSPLLVFLLTLIPAIGLILILPF), and 65 to 82 (ILTVAVLIEMAVALYLAF).

The protein resides in the cell membrane. This is an uncharacterized protein from Archaeoglobus fulgidus (strain ATCC 49558 / DSM 4304 / JCM 9628 / NBRC 100126 / VC-16).